Reading from the N-terminus, the 305-residue chain is N-acetylneuraminate lyase (305 aa).

Threonine 51 and threonine 52 together coordinate aceneuramate. The Proton donor role is filled by tyrosine 143. Catalysis depends on lysine 173, which acts as the Schiff-base intermediate with substrate. Aceneuramate contacts are provided by threonine 175, glycine 197, aspartate 199, glutamate 200, and serine 216.

It belongs to the DapA family. NanA subfamily. In terms of assembly, homotetramer.

Its subcellular location is the cytoplasm. The enzyme catalyses aceneuramate = aldehydo-N-acetyl-D-mannosamine + pyruvate. Its pathway is amino-sugar metabolism; N-acetylneuraminate degradation. In terms of biological role, catalyzes the cleavage of N-acetylneuraminic acid (sialic acid) to form pyruvate and N-acetylmannosamine via a Schiff base intermediate. It prevents sialic acids from being recycled and returning to the cell surface. Involved in the N-glycolylneuraminic acid (Neu5Gc) degradation pathway. This is N-acetylneuraminate lyase from Xenopus tropicalis (Western clawed frog).